The following is a 514-amino-acid chain: Sugar transport protein 10 (514 aa).

Topologically, residues 1–18 (MAGGAFVSEGGGGGRSYE) are cytoplasmic. 10 consecutive transmembrane segments (helical) span residues 19–39 (GGVT…GLLF), 86–106 (LFTS…SVIT), 113–133 (VSMF…AFAV), 135–155 (VSML…ANQS), 170–190 (GALN…ANLI), 204–224 (VSLG…FILP), 285–305 (LIFC…VIMF), 320–340 (AALM…FVSI), 350–370 (LLFL…GSFI), and 389–409 (WILA…GPLG). A disulfide bridge connects residues C77 and C449. Q177 serves as a coordination point for beta-D-glucose. Beta-D-glucose is bound by residues Q295, Q296, N301, and N332. W410 provides a ligand contact to beta-D-glucose. 2 helical membrane-spanning segments follow: residues 428-448 (INVS…LTML) and 453-473 (FGLF…IYFL). At 474-514 (LPETKGVPIEEMGRVWKQHWFWKKYIPEDAIIGGHDDNNTN) the chain is on the cytoplasmic side.

Belongs to the major facilitator superfamily. Sugar transporter (TC 2.A.1.1) family. Expressed in primordia of lateral roots, pollinated stigmata, and pollen tubes.

The protein resides in the membrane. It catalyses the reaction D-glucose(out) + H(+)(out) = D-glucose(in) + H(+)(in). The enzyme catalyses D-mannose(out) + H(+)(out) = D-mannose(in) + H(+)(in). It carries out the reaction D-galactose(in) + H(+)(in) = D-galactose(out) + H(+)(out). In terms of biological role, hexose-H(+) symporter that catalyzes the high-affinity uptake of glucose, galactose and mannose. Proton-coupled symporter responsible for the uptake of glucose from the apoplast into the cells. The protein is Sugar transport protein 10 of Arabidopsis thaliana (Mouse-ear cress).